We begin with the raw amino-acid sequence, 196 residues long: Imidazoleglycerol-phosphate dehydratase (196 aa).

The protein belongs to the imidazoleglycerol-phosphate dehydratase family.

It localises to the cytoplasm. It carries out the reaction D-erythro-1-(imidazol-4-yl)glycerol 3-phosphate = 3-(imidazol-4-yl)-2-oxopropyl phosphate + H2O. Its pathway is amino-acid biosynthesis; L-histidine biosynthesis; L-histidine from 5-phospho-alpha-D-ribose 1-diphosphate: step 6/9. The chain is Imidazoleglycerol-phosphate dehydratase from Oleidesulfovibrio alaskensis (strain ATCC BAA-1058 / DSM 17464 / G20) (Desulfovibrio alaskensis).